Reading from the N-terminus, the 186-residue chain is Elongation factor P (186 aa).

This sequence belongs to the elongation factor P family.

Its subcellular location is the cytoplasm. The protein operates within protein biosynthesis; polypeptide chain elongation. Its function is as follows. Involved in peptide bond synthesis. Stimulates efficient translation and peptide-bond synthesis on native or reconstituted 70S ribosomes in vitro. Probably functions indirectly by altering the affinity of the ribosome for aminoacyl-tRNA, thus increasing their reactivity as acceptors for peptidyl transferase. The polypeptide is Elongation factor P (Clostridium acetobutylicum (strain ATCC 824 / DSM 792 / JCM 1419 / IAM 19013 / LMG 5710 / NBRC 13948 / NRRL B-527 / VKM B-1787 / 2291 / W)).